A 458-amino-acid polypeptide reads, in one-letter code: Sugar transporter ERD6-like 10 (458 aa).

Transmembrane regions (helical) follow at residues 17 to 37 (ITAC…SYGC), 66 to 86 (FLNL…VILG), 96 to 116 (LFCI…WLDL), 119 to 139 (ISLG…IAEI), 150 to 170 (ASTL…GTVI), 174 to 194 (VLAV…YFIP), 257 to 277 (LVVG…GITY), 292 to 312 (LGSM…LILV), 319 to 339 (PLLL…GVSF), 350 to 370 (FIPV…AIGI), 393 to 413 (IVAL…NFMF), and 419 to 439 (GTFY…WMLV).

Belongs to the major facilitator superfamily. Sugar transporter (TC 2.A.1.1) family.

The protein localises to the membrane. Its function is as follows. Sugar transporter. This Arabidopsis thaliana (Mouse-ear cress) protein is Sugar transporter ERD6-like 10.